Reading from the N-terminus, the 146-residue chain is Large ribosomal subunit protein uL15 (146 aa).

The interval 1–54 (MTLRLNELAPAEGAKRDNRRLGRGIGSGVGKTGGRGVKGQKSRKSGGVRPGFEG) is disordered. Residues 23–37 (RGIGSGVGKTGGRGV) are compositionally biased toward gly residues.

It belongs to the universal ribosomal protein uL15 family. In terms of assembly, part of the 50S ribosomal subunit.

Its function is as follows. Binds to the 23S rRNA. In Acinetobacter baylyi (strain ATCC 33305 / BD413 / ADP1), this protein is Large ribosomal subunit protein uL15.